The chain runs to 95 residues: Aspartyl/glutamyl-tRNA(Asn/Gln) amidotransferase subunit C (95 aa).

This sequence belongs to the GatC family. As to quaternary structure, heterotrimer of A, B and C subunits.

The catalysed reaction is L-glutamyl-tRNA(Gln) + L-glutamine + ATP + H2O = L-glutaminyl-tRNA(Gln) + L-glutamate + ADP + phosphate + H(+). The enzyme catalyses L-aspartyl-tRNA(Asn) + L-glutamine + ATP + H2O = L-asparaginyl-tRNA(Asn) + L-glutamate + ADP + phosphate + 2 H(+). Allows the formation of correctly charged Asn-tRNA(Asn) or Gln-tRNA(Gln) through the transamidation of misacylated Asp-tRNA(Asn) or Glu-tRNA(Gln) in organisms which lack either or both of asparaginyl-tRNA or glutaminyl-tRNA synthetases. The reaction takes place in the presence of glutamine and ATP through an activated phospho-Asp-tRNA(Asn) or phospho-Glu-tRNA(Gln). The sequence is that of Aspartyl/glutamyl-tRNA(Asn/Gln) amidotransferase subunit C from Hyphomonas neptunium (strain ATCC 15444).